The following is a 290-amino-acid chain: ATP synthase subunit a (290 aa).

The next 7 membrane-spanning stretches (helical) occupy residues 54-74, 115-135, 136-156, 164-184, 201-221, 233-253, and 254-274; these read AVHLDTLGWSLLMGAIFILLF, IAPLALTIFVWVFLMNSLKWI, PVDYIPGIAHLLGLPAFKIVP, FGLSLGVFILILFYSFKVKGF, LVPFNLFLEILGLLTKPLSLA, VVFILIALLPFYVQWTLNVPW, and AIFHILVIPLQAFIFMVLTVV.

The protein belongs to the ATPase A chain family. In terms of assembly, F-type ATPases have 2 components, CF(1) - the catalytic core - and CF(0) - the membrane proton channel. CF(1) has five subunits: alpha(3), beta(3), gamma(1), delta(1), epsilon(1). CF(0) has three main subunits: a(1), b(2) and c(9-12). The alpha and beta chains form an alternating ring which encloses part of the gamma chain. CF(1) is attached to CF(0) by a central stalk formed by the gamma and epsilon chains, while a peripheral stalk is formed by the delta and b chains.

The protein localises to the cell inner membrane. Functionally, key component of the proton channel; it plays a direct role in the translocation of protons across the membrane. This Stutzerimonas stutzeri (strain A1501) (Pseudomonas stutzeri) protein is ATP synthase subunit a.